A 103-amino-acid polypeptide reads, in one-letter code: Large ribosomal subunit protein bL21 (103 aa).

The protein belongs to the bacterial ribosomal protein bL21 family. As to quaternary structure, part of the 50S ribosomal subunit. Contacts protein L20.

Functionally, this protein binds to 23S rRNA in the presence of protein L20. This chain is Large ribosomal subunit protein bL21, found in Pseudomonas fluorescens (strain Pf0-1).